The following is a 263-amino-acid chain: Aquaporin-8 (263 aa).

Residues 1–38 (MSGEQTPMCSMDLREIKGKETNMADSYHGMSWYEQYIQ) are Cytoplasmic-facing. The helical transmembrane segment at 39-59 (PCVVELLGSALFIFIGCLSVI) threads the bilayer. At Cys-55 the chain carries Cysteine persulfide. Residue Cys-55 is modified to Cysteine sulfenic acid (-SOH). The Extracellular segment spans residues 60 to 86 (ENSPNTGLLQPALAHGLALGLIIATLG). The helical transmembrane segment at 87–107 (NISGGHFNPAVSLAVTLVGGL) threads the bilayer. Residues 94-96 (NPA) carry the NPA 1 motif. The Cytoplasmic segment spans residues 108–109 (KT). A helical membrane pass occupies residues 110–130 (MLLIPYWVSQLFGGMIGAALA). Over 131–158 (KVVSPEERFWNASGAAFAIVQEQEQVAE) the chain is Extracellular. A glycan (N-linked (GlcNAc...) asparagine) is linked at Asn-141. The chain crosses the membrane as a helical span at residues 159–179 (ALGVEIVMTMLLVLAVCMGAV). Residues 180–185 (NEKTMG) lie on the Cytoplasmic side of the membrane. Residues 186–206 (PLAPFSIGFSVIVDILAGGGI) traverse the membrane as a helical segment. Residues 207–230 (SGACMNPARAFGPAVMAGYWDFHW) lie on the Extracellular side of the membrane. Residues 212–214 (NPA) carry the NPA 2 motif. The chain crosses the membrane as a helical span at residues 231–251 (IYWLGPLLAGLFVGLLIRLFI). Residues 252–263 (GDEKTRLILKSR) lie on the Cytoplasmic side of the membrane.

The protein belongs to the MIP/aquaporin (TC 1.A.8) family. N-glycosylated. Post-translationally, sulfenylation at Cys-55(C55-SOH) when hydrogen peroxide flows through the AQP8 channel, making it susceptible to hydrogen sulfide produced by CBS. In terms of processing, persulfidation at Cys-55 is required to gate AQP8 channel; under stress condition, hydrogen peroxide accumulates in the cell leading to CBS activation that produces hydrogen sulfide inducing persulfidation of oxidized Cys-55 (C55-SOH). In terms of tissue distribution, highly expressed in sperm, pancreas and liver. Expressed in hepatocytes, acinal cells of pancreas and salivary gland, and absorptive colonic epithelial cells. Expressed in the myoepithelium of submandibular and parotid glands. Expressed in pancreatic beta-cells. Expressed in testis but not in epididymis. Expressed in small intestine.

It is found in the cell membrane. It localises to the mitochondrion inner membrane. Its subcellular location is the apical cell membrane. The protein resides in the basolateral cell membrane. The protein localises to the smooth endoplasmic reticulum membrane. It catalyses the reaction H2O(in) = H2O(out). It carries out the reaction NH4(+)(in) = NH4(+)(out). The catalysed reaction is H2O2(out) = H2O2(in). The enzyme catalyses formamide(out) = formamide(in). It catalyses the reaction methylamine(out) = methylamine(in). With respect to regulation, reversibly gated by a two-step sulfenylation-persulfidation process in cells undergoing diverse stresses. Its function is as follows. Channel that allows the facilitated permeation of water and uncharged molecules, such as hydrogen peroxide and the neutral form of ammonia (NH3), through cellular membranes such as plasma membrane, inner mitochondrial membrane and endoplasmic reticulum membrane of several tissues. The transport of ammonia neutral form induces a parallel transport of proton, at alkaline pH when the concentration of ammonia is high. However, it is unclear whether the transport of proton takes place via the aquaporin or via an endogenous pathway. Also, may transport ammonia analogs such as formamide and methylamine, a transport favourited at basic pH due to the increase of unprotonated (neutral) form, which is expected to favor diffusion. Does not transport urea or glycerol. The water transport mechanism is mercury- and copper-sensitive and passive in response to osmotic driving forces. At the canicular plasma membrane, mediates the osmotic transport of water toward the bile canaliculus and facilitates the cAMP-induced bile canalicular water secretion, a process involved in bile formation. In addition, mediates the hydrogen peroxide release from hepatocyte mitochondria that modulates the SREBF2-mediated cholesterol synthesis and facilitates the mitochondrial ammonia uptake which is metabolized into urea, mainly under glucagon stimulation. In B cells, transports the CYBB-generated hydrogen peroxide from the external leaflet of the plasma membrane to the cytosol to promote B cell activation and differentiation for signal amplification. In the small intestine and colon system, mediates water transport through mitochondria and apical membrane of epithelial cells. May play an important role in the adaptive response of proximal tubule cells to acidosis possibly facilitating mitochondrial ammonia transport. The protein is Aquaporin-8 of Rattus norvegicus (Rat).